A 214-amino-acid chain; its full sequence is Thiopurine S-methyltransferase (214 aa).

S-adenosyl-L-methionine-binding residues include tryptophan 10, leucine 44, glutamate 65, and arginine 122.

Belongs to the class I-like SAM-binding methyltransferase superfamily. TPMT family.

The protein resides in the cytoplasm. It carries out the reaction S-adenosyl-L-methionine + a thiopurine = S-adenosyl-L-homocysteine + a thiopurine S-methylether.. The polypeptide is Thiopurine S-methyltransferase (Teredinibacter turnerae (strain ATCC 39867 / T7901)).